The following is a 115-amino-acid chain: Large ribosomal subunit protein bL19 (115 aa).

This sequence belongs to the bacterial ribosomal protein bL19 family.

Its function is as follows. This protein is located at the 30S-50S ribosomal subunit interface and may play a role in the structure and function of the aminoacyl-tRNA binding site. The protein is Large ribosomal subunit protein bL19 of Francisella philomiragia subsp. philomiragia (strain ATCC 25017 / CCUG 19701 / FSC 153 / O#319-036).